Consider the following 876-residue polypeptide: Alanine--tRNA ligase (876 aa).

4 residues coordinate Zn(2+): His565, His569, Cys667, and His671.

It belongs to the class-II aminoacyl-tRNA synthetase family. The cofactor is Zn(2+).

It localises to the cytoplasm. It carries out the reaction tRNA(Ala) + L-alanine + ATP = L-alanyl-tRNA(Ala) + AMP + diphosphate. Functionally, catalyzes the attachment of alanine to tRNA(Ala) in a two-step reaction: alanine is first activated by ATP to form Ala-AMP and then transferred to the acceptor end of tRNA(Ala). Also edits incorrectly charged Ser-tRNA(Ala) and Gly-tRNA(Ala) via its editing domain. The chain is Alanine--tRNA ligase from Staphylococcus aureus (strain bovine RF122 / ET3-1).